The sequence spans 628 residues: MKNILSFSFSFSFLYILFLLLFLNNNLLIIKSCPTYPNPIKLNQNESLLIEAYNQIDELIQNNMKLNNVTSFIATIVYMDEIVWSKTYGNLNPLDDKSPPLTIDNNIKIASLTKVFTSLMMYQLRDNGKILSLDDKISNYFPKFKINDIYKLKSSGSGSKSGKSDIKDNSITFRQLASHQSGLPREVPCDSITYGTKNCTENIIFERLSKQFTLLKQYSEVHYSNLGFALLGKILGEIISNSTNNNNNNNNNNNNNNNNNNNNNNNNNNNNNNNNNNNNNNKIKTNDLISSNEQFQYENYILNNILKPLNMMNSTFNYDDIDSNNLALGYTILKNGTFEIVQRQNSGWNSPAGGLYSTARDISKFMIFWLNNGIISNNNNKNDNNNNNNENNDNLVKESTINEALLPVSLISDGLTAYGTPFEMWYDQQNNIWLKSKAGIANAYRTQMALIPPLKLGMFFSSQFVFDTPDLFTREVSQILIPVYEYLLNKKQEEKEEKEEEEENQQDESQQQQQQQQNNIKLLSNDIFIGNYLNEFGSIFNVFIDDSTGLLYCNFGNDFVYLISDFDDSYNFPHIKRISLLDPKKYICWPIVDGANEELIYFTFNDDDSRNSITCTGVQVLGQFLYKT.

A signal peptide spans 1–28 (MKNILSFSFSFSFLYILFLLLFLNNNLL). 4 N-linked (GlcNAc...) asparagine glycosylation sites follow: Asn-45, Asn-68, Asn-198, and Asn-241. Over residues 245–281 (NNNNNNNNNNNNNNNNNNNNNNNNNNNNNNNNNNNNN) the composition is skewed to low complexity. The disordered stretch occupies residues 245–285 (NNNNNNNNNNNNNNNNNNNNNNNNNNNNNNNNNNNNNKIKT). Residues Asn-313 and Asn-335 are each glycosylated (N-linked (GlcNAc...) asparagine). Residues 494–516 (EKEEKEEEEENQQDESQQQQQQQ) form a disordered region. Over residues 496 to 506 (EEKEEEEENQQ) the composition is skewed to acidic residues. Residues 507–516 (DESQQQQQQQ) show a composition bias toward low complexity.

This sequence belongs to the beta-lactamase family.

It localises to the secreted. In Dictyostelium discoideum (Social amoeba), this protein is Beta-lactamase-like protein 1.